A 485-amino-acid polypeptide reads, in one-letter code: Glutamate--tRNA ligase (485 aa).

The 'HIGH' region motif lies at 11 to 21 (PSPTGHLHIGN). The 'KMSKS' region signature appears at 252-256 (KLSKR). K255 is a binding site for ATP.

It belongs to the class-I aminoacyl-tRNA synthetase family. Glutamate--tRNA ligase type 1 subfamily. Monomer.

Its subcellular location is the cytoplasm. The catalysed reaction is tRNA(Glu) + L-glutamate + ATP = L-glutamyl-tRNA(Glu) + AMP + diphosphate. In terms of biological role, catalyzes the attachment of glutamate to tRNA(Glu) in a two-step reaction: glutamate is first activated by ATP to form Glu-AMP and then transferred to the acceptor end of tRNA(Glu). This chain is Glutamate--tRNA ligase, found in Bacillus cereus (strain ATCC 14579 / DSM 31 / CCUG 7414 / JCM 2152 / NBRC 15305 / NCIMB 9373 / NCTC 2599 / NRRL B-3711).